The primary structure comprises 264 residues: Indole-3-glycerol phosphate synthase (264 aa).

The protein belongs to the TrpC family.

It catalyses the reaction 1-(2-carboxyphenylamino)-1-deoxy-D-ribulose 5-phosphate + H(+) = (1S,2R)-1-C-(indol-3-yl)glycerol 3-phosphate + CO2 + H2O. It participates in amino-acid biosynthesis; L-tryptophan biosynthesis; L-tryptophan from chorismate: step 4/5. In Azoarcus sp. (strain BH72), this protein is Indole-3-glycerol phosphate synthase.